We begin with the raw amino-acid sequence, 1260 residues long: Methionine synthase (1260 aa).

The 321-residue stretch at 13–333 (FGIIRKILSE…DHIRAFCNAI (321 aa)) folds into the Hcy-binding domain. C255, C318, and C319 together coordinate Zn(2+). The Pterin-binding domain maps to 364–625 (FVNVGERCNV…IPKDLLKLVE (262 aa)). The 95-residue stretch at 655 to 749 (EVEEWRNKPV…FMEEEKRLKR (95 aa)) folds into the B12-binding N-terminal domain. Residues E699, 775–779 (GDVHD), H778, S823, T827, and A879 contribute to the methylcob(III)alamin site. The B12-binding domain maps to 766 to 883 (GVVVLATVKG…VHVLDASRSV (118 aa)). The AdoMet activation domain occupies 916–1256 (SLKDRKYTSL…LSSILSYDRL (341 aa)). S-adenosyl-L-methionine is bound by residues D966, R1163, and 1218–1219 (YF).

The protein belongs to the vitamin-B12 dependent methionine synthase family. Methylcob(III)alamin serves as cofactor. Requires Zn(2+) as cofactor.

It carries out the reaction (6S)-5-methyl-5,6,7,8-tetrahydrofolate + L-homocysteine = (6S)-5,6,7,8-tetrahydrofolate + L-methionine. Its pathway is amino-acid biosynthesis; L-methionine biosynthesis via de novo pathway; L-methionine from L-homocysteine (MetH route): step 1/1. Its function is as follows. Catalyzes the transfer of a methyl group from methyl-cobalamin to homocysteine, yielding enzyme-bound cob(I)alamin and methionine. Subsequently, remethylates the cofactor using methyltetrahydrofolate. This chain is Methionine synthase (mtr), found in Dictyostelium discoideum (Social amoeba).